Reading from the N-terminus, the 1150-residue chain is ATP-dependent DNA helicase Q-like 4B (1150 aa).

Disordered regions lie at residues 124–143 (TPAIDNDSTSRTSSTKGSTF) and 154–179 (CAHNHPEHSQRSVRGTAKSIDSFSSS). Residues 132–142 (TSRTSSTKGST) are compositionally biased toward low complexity. Residues 327 to 361 (DHVEQLHQKRLLLKKQIQQLEILIHNKERKKSQCL) adopt a coiled-coil conformation. Basic and acidic residues predominate over residues 416 to 428 (YDISSGSEEREQS). The disordered stretch occupies residues 416–446 (YDISSGSEEREQSVSEVIDVTDTESSNDKKW). Positions 478 to 653 (INATMSGCDV…VQALGLVNCV (176 aa)) constitute a Helicase ATP-binding domain. ATP is bound at residue 491 to 498 (MPTGGGKS). Residues 597–600 (DEAH) carry the DEAH box motif. Residues 678–823 (DIDKFIRENH…QMKMGYNCKA (146 aa)) form the Helicase C-terminal domain. The 83-residue stretch at 1029–1111 (SNLSGILLTA…DSTINDHYKT (83 aa)) folds into the HRDC domain. The disordered stretch occupies residues 1106-1150 (NDHYKTRPGSGKRRRDENVNPNVAEDDDPDWSASQSHKKVVKNKK). The span at 1141 to 1150 (SHKKVVKNKK) shows a compositional bias: basic residues.

The protein belongs to the helicase family. RecQ subfamily. Mg(2+) serves as cofactor. Requires Mn(2+) as cofactor. Mostly expressed in roots, seedlings, shoots, shoot apical mersitem, flowers, and siliques.

It localises to the nucleus. It catalyses the reaction Couples ATP hydrolysis with the unwinding of duplex DNA by translocating in the 3'-5' direction.. It carries out the reaction ATP + H2O = ADP + phosphate + H(+). Functionally, 3'-5' DNA helicase that may play a role in the repair of DNA. Required to promote but not to suppress crossovers. The sequence is that of ATP-dependent DNA helicase Q-like 4B (RECQL4B) from Arabidopsis thaliana (Mouse-ear cress).